Reading from the N-terminus, the 469-residue chain is tRNA modification GTPase MnmE (469 aa).

(6S)-5-formyl-5,6,7,8-tetrahydrofolate-binding residues include Arg26, Glu88, and Arg127. The region spanning 222-390 (GLKVAIVGRP…LEDAILHLVQ (169 aa)) is the TrmE-type G domain. K(+) is bound at residue Asn232. Residues 232-237 (NVGKSS), 251-257 (TDLPGTT), 276-279 (DTAG), and 344-347 (NKAD) each bind GTP. Ser236 contributes to the Mg(2+) binding site. Residues Thr251, Leu253, and Thr256 each contribute to the K(+) site. Thr257 is a Mg(2+) binding site. Position 469 (Lys469) interacts with (6S)-5-formyl-5,6,7,8-tetrahydrofolate.

Belongs to the TRAFAC class TrmE-Era-EngA-EngB-Septin-like GTPase superfamily. TrmE GTPase family. Homodimer. Heterotetramer of two MnmE and two MnmG subunits. K(+) serves as cofactor.

It localises to the cytoplasm. Functionally, exhibits a very high intrinsic GTPase hydrolysis rate. Involved in the addition of a carboxymethylaminomethyl (cmnm) group at the wobble position (U34) of certain tRNAs, forming tRNA-cmnm(5)s(2)U34. This chain is tRNA modification GTPase MnmE, found in Synechococcus elongatus.